The chain runs to 241 residues: MVKDTLFSTPIAKLGDFIFDENVAEVFPDMIQRSVPGYSNIITAIGMLAERFVTADSNVYDLGCSRGAATLSARRNIHQPNVKIIGIDNSQPMVERCRQHIAAYHSEVPVEILCDDIRHVEIKNASMVILNFTLQFLPPEDRVALLTKIYEGLNPNGVLVLSEKFRFEDTKIDHLLIDLHHQFKRANGYSELEVSQKRTALENVMRTDSIETHKVRLKNVGFSQVELWFQCFNFGSMIAVK.

S-adenosyl-L-methionine-binding positions include Tyr-38, 63–65, 88–89, 116–117, Asn-131, and Arg-198; these read GCS, DN, and DI.

The protein belongs to the class I-like SAM-binding methyltransferase superfamily. Cx-SAM synthase family. In terms of assembly, homodimer.

It carries out the reaction prephenate + S-adenosyl-L-methionine = carboxy-S-adenosyl-L-methionine + 3-phenylpyruvate + H2O. Its function is as follows. Catalyzes the conversion of S-adenosyl-L-methionine (SAM) to carboxy-S-adenosyl-L-methionine (Cx-SAM). The protein is Carboxy-S-adenosyl-L-methionine synthase of Haemophilus influenzae (strain 86-028NP).